Reading from the N-terminus, the 577-residue chain is Proline--tRNA ligase (577 aa).

The protein belongs to the class-II aminoacyl-tRNA synthetase family. ProS type 1 subfamily. In terms of assembly, homodimer.

The protein resides in the cytoplasm. The enzyme catalyses tRNA(Pro) + L-proline + ATP = L-prolyl-tRNA(Pro) + AMP + diphosphate. In terms of biological role, catalyzes the attachment of proline to tRNA(Pro) in a two-step reaction: proline is first activated by ATP to form Pro-AMP and then transferred to the acceptor end of tRNA(Pro). As ProRS can inadvertently accommodate and process non-cognate amino acids such as alanine and cysteine, to avoid such errors it has two additional distinct editing activities against alanine. One activity is designated as 'pretransfer' editing and involves the tRNA(Pro)-independent hydrolysis of activated Ala-AMP. The other activity is designated 'posttransfer' editing and involves deacylation of mischarged Ala-tRNA(Pro). The misacylated Cys-tRNA(Pro) is not edited by ProRS. This chain is Proline--tRNA ligase, found in Thermotoga maritima (strain ATCC 43589 / DSM 3109 / JCM 10099 / NBRC 100826 / MSB8).